The chain runs to 177 residues: Transcriptional repressor NrdR (177 aa).

A zinc finger spans residues 3–34 (CLFCQHTDTRVIDSRVSEDGATIRRRRECEAC). The 91-residue stretch at 49–139 (PVIIKKDGGR…VYRSFQDVAD (91 aa)) folds into the ATP-cone domain.

The protein belongs to the NrdR family. Zn(2+) is required as a cofactor.

Functionally, negatively regulates transcription of bacterial ribonucleotide reductase nrd genes and operons by binding to NrdR-boxes. The sequence is that of Transcriptional repressor NrdR from Xylella fastidiosa (strain M23).